The following is a 390-amino-acid chain: Coiled-coil domain-containing protein 85C (390 aa).

Coiled coils occupy residues 26 to 86 (KEEL…RELC) and 116 to 146 (KEVGTYQQKLKELEAKQESLVRDNLELKEII). The tract at residues 153-237 (RNGPGSRSSI…RSIPNGLNDS (85 aa)) is disordered. The segment covering 157–172 (GSRSSIDSQNSLTNLN) has biased composition (polar residues). Low complexity predominate over residues 182-194 (DGSSTSSTGSAGS).

The protein belongs to the CCDC85 family.

Its subcellular location is the cell junction. It is found in the tight junction. It localises to the adherens junction. Its function is as follows. May play a role in cell-cell adhesion and epithelium development. May play an important role in cortical development, especially in the maintenance of radial glia. This Xenopus laevis (African clawed frog) protein is Coiled-coil domain-containing protein 85C (ccdc85c).